The sequence spans 142 residues: Large ribosomal subunit protein uL11 (142 aa).

It belongs to the universal ribosomal protein uL11 family. Part of the ribosomal stalk of the 50S ribosomal subunit. Interacts with L10 and the large rRNA to form the base of the stalk. L10 forms an elongated spine to which L12 dimers bind in a sequential fashion forming a multimeric L10(L12)X complex. One or more lysine residues are methylated.

Forms part of the ribosomal stalk which helps the ribosome interact with GTP-bound translation factors. The polypeptide is Large ribosomal subunit protein uL11 (Vibrio vulnificus (strain CMCP6)).